We begin with the raw amino-acid sequence, 471 residues long: Proline--tRNA ligase (471 aa).

Belongs to the class-II aminoacyl-tRNA synthetase family. ProS type 3 subfamily. Homodimer.

Its subcellular location is the cytoplasm. The enzyme catalyses tRNA(Pro) + L-proline + ATP = L-prolyl-tRNA(Pro) + AMP + diphosphate. Functionally, catalyzes the attachment of proline to tRNA(Pro) in a two-step reaction: proline is first activated by ATP to form Pro-AMP and then transferred to the acceptor end of tRNA(Pro). This Archaeoglobus fulgidus (strain ATCC 49558 / DSM 4304 / JCM 9628 / NBRC 100126 / VC-16) protein is Proline--tRNA ligase.